Here is a 290-residue protein sequence, read N- to C-terminus: 4-hydroxybenzoate octaprenyltransferase (290 aa).

Helical transmembrane passes span 33–53 (LWAL…AVFV), 99–119 (LFVI…VKTI), 141–161 (LPQV…FCAV), 213–233 (LIIG…GWLN), 234–254 (GLGA…IWQQ), and 268–288 (AFLN…LSYL).

This sequence belongs to the UbiA prenyltransferase family. It depends on Mg(2+) as a cofactor.

The protein localises to the cell inner membrane. It carries out the reaction all-trans-octaprenyl diphosphate + 4-hydroxybenzoate = 4-hydroxy-3-(all-trans-octaprenyl)benzoate + diphosphate. It participates in cofactor biosynthesis; ubiquinone biosynthesis. In terms of biological role, catalyzes the prenylation of para-hydroxybenzoate (PHB) with an all-trans polyprenyl group. Mediates the second step in the final reaction sequence of ubiquinone-8 (UQ-8) biosynthesis, which is the condensation of the polyisoprenoid side chain with PHB, generating the first membrane-bound Q intermediate 3-octaprenyl-4-hydroxybenzoate. This chain is 4-hydroxybenzoate octaprenyltransferase, found in Cronobacter sakazakii (strain ATCC BAA-894) (Enterobacter sakazakii).